A 687-amino-acid polypeptide reads, in one-letter code: Bifunctional lysine-specific demethylase and histidyl-hydroxylase NO66 (687 aa).

The tract at residues 1 to 174 is disordered; it reads MSDKNKKVSA…RSCPLPSKKN (174 aa). Over residues 23–32 the composition is skewed to basic and acidic residues; sequence DVQKGTKNSD. Composition is skewed to low complexity over residues 33–50 and 58–74; these read KNGA…SKNG and KKNG…SSSS. Residues 75-96 are compositionally biased toward acidic residues; the sequence is GEDEEDDSTDSSDEYESSESGE. Polar residues-rich tracts occupy residues 100–116 and 136–156; these read LNSH…ANTR and RTSS…QQPK. Residues 347–483 enclose the JmjC domain; it reads NPSSYLVQLR…NLMEKLMPLV (137 aa). Positions 387, 389, and 449 each coordinate Fe cation.

The protein belongs to the ROX family. NO66 subfamily. Fe(2+) serves as cofactor.

The protein localises to the nucleus. The catalysed reaction is N(6),N(6)-dimethyl-L-lysyl(36)-[histone H3] + 2 2-oxoglutarate + 2 O2 = L-lysyl(36)-[histone H3] + 2 formaldehyde + 2 succinate + 2 CO2. Oxygenase that can act as both a histone lysine demethylase and a ribosomal histidine hydroxylase. Specifically demethylates 'Lys-4' (H3K4me) and 'Lys-36' (H3K36me) of histone H3, thereby playing a central role in histone code. This is Bifunctional lysine-specific demethylase and histidyl-hydroxylase NO66 from Drosophila persimilis (Fruit fly).